The sequence spans 153 residues: Endoribonuclease YbeY (153 aa).

His-114, His-118, and His-124 together coordinate Zn(2+).

This sequence belongs to the endoribonuclease YbeY family. Zn(2+) serves as cofactor.

Its subcellular location is the cytoplasm. Single strand-specific metallo-endoribonuclease involved in late-stage 70S ribosome quality control and in maturation of the 3' terminus of the 16S rRNA. This is Endoribonuclease YbeY from Shewanella baltica (strain OS195).